A 128-amino-acid polypeptide reads, in one-letter code: Large ribosomal subunit protein bL17 (128 aa).

Belongs to the bacterial ribosomal protein bL17 family. As to quaternary structure, part of the 50S ribosomal subunit. Contacts protein L32.

The sequence is that of Large ribosomal subunit protein bL17 from Ehrlichia ruminantium (strain Gardel).